We begin with the raw amino-acid sequence, 108 residues long: Urease subunit beta (108 aa).

Belongs to the urease beta subunit family. In terms of assembly, probable heterotrimer of UreA (gamma), UreB (beta) and UreC (alpha) subunits. Three heterotrimers associate to form the active enzyme. The trimeric urease interacts with an accessory complex composed of UreD, UreF and UreG, which is required for the assembly of the nickel containing metallocenter of UreC. The UreE protein may also play a direct role in nickel transfer to the urease apoprotein.

It is found in the cytoplasm. The enzyme catalyses urea + 2 H2O + H(+) = hydrogencarbonate + 2 NH4(+). It participates in nitrogen metabolism; urea degradation; CO(2) and NH(3) from urea (urease route): step 1/1. The sequence is that of Urease subunit beta from Proteus mirabilis (strain HI4320).